Consider the following 345-residue polypeptide: Eukaryotic translation initiation factor 3 subunit F (345 aa).

Residues 30-166 form the MPN domain; that stretch reads VVIQPQAIFS…TRAYISAPVG (137 aa). The tract at residues 308 to 345 is disordered; sequence GGESGGAESGAQRGQRGGKGGRGGQQRNQERGAEEARA. Over residues 322–331 the composition is skewed to gly residues; that stretch reads QRGGKGGRGG. Basic and acidic residues predominate over residues 335-345; sequence NQERGAEEARA.

Belongs to the eIF-3 subunit F family. Component of the eukaryotic translation initiation factor 3 (eIF-3) complex.

It is found in the cytoplasm. Functionally, component of the eukaryotic translation initiation factor 3 (eIF-3) complex, which is involved in protein synthesis of a specialized repertoire of mRNAs and, together with other initiation factors, stimulates binding of mRNA and methionyl-tRNAi to the 40S ribosome. The eIF-3 complex specifically targets and initiates translation of a subset of mRNAs involved in cell proliferation. The chain is Eukaryotic translation initiation factor 3 subunit F from Aspergillus clavatus (strain ATCC 1007 / CBS 513.65 / DSM 816 / NCTC 3887 / NRRL 1 / QM 1276 / 107).